A 609-amino-acid polypeptide reads, in one-letter code: Albumin (609 aa).

The signal sequence occupies residues 1 to 18; sequence MKWVTFISLLFLFSSAYS. Positions 19-24 are excised as a propeptide; the sequence is RGVFRR. Albumin domains are found at residues 19–210, 211–403, and 404–601; these read RGVF…DELR, DEGK…EFKP, and LVEE…KLVA. H27 lines the Cu cation pocket. S29 carries the post-translational modification Phosphoserine. Ca(2+) contacts are provided by E30 and D37. C77 and C86 are disulfide-bonded. Residues S82 and S89 each carry the phosphoserine modification. H91 is a binding site for Zn(2+). 6 disulfide bridges follow: C99–C115, C114–C125, C148–C193, C192–C201, C224–C270, and C269–C277. T107 is modified (phosphothreonine). At K229 the chain carries N6-succinyllysine. K264 contributes to the (4Z,15Z)-bilirubin IXalpha binding site. A Ca(2+)-binding site is contributed by E268. Zn(2+) is bound by residues H271 and D273. Residues D273, E276, D279, and D283 each coordinate Ca(2+). 8 cysteine pairs are disulfide-bonded: C289-C303, C302-C313, C340-C385, C384-C393, C416-C462, C461-C472, C485-C501, and C500-C511. S297 is subject to Phosphoserine. S443 carries the phosphoserine modification. A phosphothreonine mark is found at T444 and T446. K460 bears the N6-succinyllysine mark. S513 is modified (phosphoserine). 2 disulfides stabilise this stretch: C538–C583 and C582–C591. Residue K543 is modified to N6-succinyllysine. Position 558 is an N6-methyllysine (K558). The residue at position 570 (T570) is a Phosphothreonine. K588 bears the N6-succinyllysine mark.

This sequence belongs to the ALB/AFP/VDB family. As to quaternary structure, interacts with FCGRT; this interaction regulates ALB homeostasis. Interacts with TASOR. In plasma, occurs in a covalently-linked complex with chromophore-bound alpha-1-microglobulin; this interaction does not prevent fatty acid binding to ALB. In terms of processing, phosphorylated by FAM20C in the extracellular medium. Plasma.

It localises to the secreted. Its function is as follows. Binds water, Ca(2+), Na(+), K(+), fatty acids, hormones, bilirubin and drugs. Its main function is the regulation of the colloidal osmotic pressure of blood. Major zinc transporter in plasma, typically binds about 80% of all plasma zinc. Major calcium and magnesium transporter in plasma, binds approximately 45% of circulating calcium and magnesium in plasma. Potentially has more than two calcium-binding sites and might additionally bind calcium in a non-specific manner. The shared binding site between zinc and calcium at residue Asp-273 suggests a crosstalk between zinc and calcium transport in the blood. The rank order of affinity is zinc &gt; calcium &gt; magnesium. Binds to the bacterial siderophore enterobactin and inhibits enterobactin-mediated iron uptake of E.coli from ferric transferrin, and may thereby limit the utilization of iron and growth of enteric bacteria such as E.coli. Does not prevent iron uptake by the bacterial siderophore aerobactin. This is Albumin (ALB) from Pongo abelii (Sumatran orangutan).